Consider the following 299-residue polypeptide: Ribosomal RNA small subunit methyltransferase H (299 aa).

S-adenosyl-L-methionine contacts are provided by residues 36–38 (GGH), aspartate 55, aspartate 103, and glutamine 110. Composition is skewed to basic and acidic residues over residues 268 to 282 (KPVRPSEEEIRENPR) and 289 to 299 (RAAERIEKGGD). The disordered stretch occupies residues 268-299 (KPVRPSEEEIRENPRARSGRLRAAERIEKGGD).

Belongs to the methyltransferase superfamily. RsmH family.

The protein resides in the cytoplasm. It catalyses the reaction cytidine(1402) in 16S rRNA + S-adenosyl-L-methionine = N(4)-methylcytidine(1402) in 16S rRNA + S-adenosyl-L-homocysteine + H(+). Its function is as follows. Specifically methylates the N4 position of cytidine in position 1402 (C1402) of 16S rRNA. The polypeptide is Ribosomal RNA small subunit methyltransferase H (Thermotoga sp. (strain RQ2)).